The chain runs to 367 residues: Histidinol-phosphate aminotransferase (367 aa).

Lys-226 carries the N6-(pyridoxal phosphate)lysine modification.

It belongs to the class-II pyridoxal-phosphate-dependent aminotransferase family. Histidinol-phosphate aminotransferase subfamily. Homodimer. The cofactor is pyridoxal 5'-phosphate.

The catalysed reaction is L-histidinol phosphate + 2-oxoglutarate = 3-(imidazol-4-yl)-2-oxopropyl phosphate + L-glutamate. It functions in the pathway amino-acid biosynthesis; L-histidine biosynthesis; L-histidine from 5-phospho-alpha-D-ribose 1-diphosphate: step 7/9. This is Histidinol-phosphate aminotransferase from Aliarcobacter butzleri (strain RM4018) (Arcobacter butzleri).